A 283-amino-acid polypeptide reads, in one-letter code: MDILLALLPAIAWGNILLVSVKMGGGAYSQTVGMTIGALFFATIMYVFTQPALTMTILIVGFISGLFWALGQVNQLKTVEKLGVSTTVTISTGMQLVATSIFGVIAFREWTTTTTIILGTIAILLIVVGVVFTSLDDKENAQPPGQLKKGLLTLIVSTFGYLVYVIIIRWYNIDGWSAILPQAVGMFVGAVVLTSKHKPFNKYAIRNALSGLLWGTGNLFLLLSLPRVGVATSFPLSQTGIVISTFGAIVFLGEKKTKRQLIFIALGSVLIIGGAVLLGMTKA.

A run of 10 helical transmembrane segments spans residues 4–21 (LLAL…LVSV), 26–48 (GAYS…MYVF), 52–71 (ALTM…WALG), 84–106 (VSTT…GVIA), 110–132 (WTTT…GVVF), 151–173 (LLTL…WYNI), 178–195 (AILP…VLTS), 208–230 (ALSG…RVGV), 234–253 (FPLS…VFLG), and 260–279 (QLIF…VLLG).

This sequence belongs to the GRP transporter (TC 2.A.7.5) family.

The protein localises to the cell membrane. The protein is Putative sugar uptake protein BC_0219 of Bacillus cereus (strain ATCC 14579 / DSM 31 / CCUG 7414 / JCM 2152 / NBRC 15305 / NCIMB 9373 / NCTC 2599 / NRRL B-3711).